We begin with the raw amino-acid sequence, 99 residues long: Class II hydrophobin 1 (99 aa).

Residues 1–26 form the signal peptide; it reads MKFIAVVAALTASLAMAAPTESSTDT. 4 cysteine pairs are disulfide-bonded: Cys31-Cys80, Cys41-Cys71, Cys42-Cys54, and Cys81-Cys92.

The protein belongs to the cerato-ulmin hydrophobin family. Homotetramer. Further self-assembles to form highly ordered films at water-air interfaces through intermolecular interactions.

It localises to the secreted. The protein resides in the cell wall. Functionally, aerial growth, conidiation, and dispersal of filamentous fungi in the environment rely upon a capability of their secreting small amphipathic proteins called hydrophobins (HPBs) with low sequence identity. Class I can self-assemble into an outermost layer of rodlet bundles on aerial cell surfaces, conferring cellular hydrophobicity that supports fungal growth, development and dispersal; whereas Class II form highly ordered films at water-air interfaces through intermolecular interactions but contribute nothing to the rodlet structure. HFB1 is a class II hydrophobin that shows antifungal activity against pathogenic and opportunistic fungi such as Cryptococcus neoformans, Nakaseomyces glabrataa, or Candida tropicalis. The polypeptide is Class II hydrophobin 1 (Sodiomyces alkalinus (strain CBS 110278 / VKM F-3762 / F11) (Alkaliphilic filamentous fungus)).